Reading from the N-terminus, the 99-residue chain is Large ribosomal subunit protein bL27 (99 aa).

Residues 13-65 (AHHKGGGSTTNGRNSAGRRLGAKRADGQEVHAGSIIYRQRGTKIHPGKNVGRG) form a disordered region.

Belongs to the bacterial ribosomal protein bL27 family.

The sequence is that of Large ribosomal subunit protein bL27 from Lactobacillus delbrueckii subsp. bulgaricus (strain ATCC BAA-365 / Lb-18).